Here is a 673-residue protein sequence, read N- to C-terminus: Sodium/myo-inositol cotransporter 2 (673 aa).

Residues 1–27 are Extracellular-facing; the sequence is MESATISPQPPQSDSLEAFPQKSMEPA. The helical transmembrane segment at 28 to 48 threads the bilayer; that stretch reads DIAVLVLYFLFVLAVGLWSTV. Residues 49 to 65 are Cytoplasmic-facing; that stretch reads RTKRDTVKGYFLAGGDM. A helical transmembrane segment spans residues 66 to 88; sequence VWWPVGASLFASNVGSGHFIGLA. Residues 89–102 lie on the Extracellular side of the membrane; sequence GSGAAVGISVAAYE. A helical transmembrane segment spans residues 103-123; that stretch reads LNGLFSVLMLAWVFLPIYIAG. Residues 124-148 lie on the Cytoplasmic side of the membrane; sequence QVTTMPEYLRRRFGGNRISITLAVL. A helical membrane pass occupies residues 149–169; that stretch reads YLFIYIFTKISVDMYAGAIFI. Over 170-180 the chain is Extracellular; it reads QQSLHLDLYLA. The helical transmembrane segment at 181–201 threads the bilayer; it reads IVGLLAITALYTVAGGLAAVI. Topologically, residues 202 to 208 are cytoplasmic; sequence YTDALQT. A helical membrane pass occupies residues 209-229; that stretch reads VIMLIGAFILMGYSFAAVGGM. Topologically, residues 230–272 are extracellular; sequence EGLKDQYFLALASNRSENSSCGLPREDAFHIFRDPLTSDLPWP. The helical transmembrane segment at 273 to 293 threads the bilayer; that stretch reads GILFGMSIPSLWYWCTDQVIV. The Cytoplasmic portion of the chain corresponds to 294-308; the sequence is QRSLAAKNLSHAKGG. Residues 309 to 329 traverse the membrane as a helical segment; sequence SLMAAYLKVLPLFLMVFPGMV. Topologically, residues 330–375 are extracellular; that stretch reads SRVLFPDQVACAHPDICQRVCSNPSGCSDIAYPKLVLELLPTGLRG. Residues 376–396 traverse the membrane as a helical segment; sequence LMMAVMVAALMSSLTSIFNSA. Over 397–418 the chain is Cytoplasmic; it reads STIFTMDLWNHIRPRASERELM. The helical transmembrane segment at 419-439 threads the bilayer; sequence IVGRIFVFALVLVSILWIPIV. The Extracellular segment spans residues 440–446; that stretch reads QASQGGQ. A helical transmembrane segment spans residues 447–467; it reads LFIYIQSISSYLQPPVAMVFI. At 468–479 the chain is on the cytoplasmic side; sequence MGCFWKRTNEKG. A helical transmembrane segment spans residues 480-500; the sequence is AFSGLILGLLLGLVRLILDFV. The Extracellular segment spans residues 501–521; that stretch reads YAQPRCDQPDDRPAVVKDVHY. Residues 522 to 542 traverse the membrane as a helical segment; the sequence is LYFSMILSFTTLITVVTVSWF. The Cytoplasmic portion of the chain corresponds to 543-652; the sequence is TETPSKEMVS…SLEENPLVKT (110 aa). The chain crosses the membrane as a helical span at residues 653 to 673; sequence LLDVNCIVCISCAIFLWGYFA.

It belongs to the sodium:solute symporter (SSF) (TC 2.A.21) family.

The protein resides in the membrane. It localises to the apical cell membrane. It carries out the reaction myo-inositol(out) + 2 Na(+)(out) = myo-inositol(in) + 2 Na(+)(in). The catalysed reaction is 1D-chiro-inositol(out) + 2 Na(+)(out) = 1D-chiro-inositol(in) + 2 Na(+)(in). It catalyses the reaction D-glucose(out) + 2 Na(+)(out) = D-glucose(in) + 2 Na(+)(in). The enzyme catalyses D-xylose(out) + 2 Na(+)(out) = D-xylose(in) + 2 Na(+)(in). MI transport activity inhibited by D-chiro-inositol (DCI), phlorizin (Pz) and sodium (Na(+)). Insulin increases D-chiro-inositol uptake. Functionally, involved in the sodium-dependent cotransport of myo-inositol (MI) with a Na(+):MI stoichiometry of 2:1. Exclusively responsible for apical MI transport and absorption in intestine. Can also transport D-chiro-inositol (DCI) but not L-fucose. Exhibits stereospecific cotransport of both D-glucose and D-xylose. May induce apoptosis through the TNF-alpha, PDCD1 pathway. May play a role in the regulation of MI concentration in serum, involving reabsorption in at least the proximal tubule of the kidney. The protein is Sodium/myo-inositol cotransporter 2 of Mus musculus (Mouse).